The sequence spans 395 residues: Elongation factor Tu (395 aa).

Residues 10–204 form the tr-type G domain; sequence KPHVNIGTIG…AVDSYIPTPE (195 aa). Residues 19–26 are G1; the sequence is GHVDHGKT. 19–26 contacts GTP; the sequence is GHVDHGKT. Thr26 serves as a coordination point for Mg(2+). A G2 region spans residues 60–64; that stretch reads GITIS. Positions 81-84 are G3; that stretch reads DCPG. Residues 81–85 and 136–139 contribute to the GTP site; these read DCPGH and NKCD. Residues 136–139 form a G4 region; the sequence is NKCD. The G5 stretch occupies residues 174 to 176; it reads SAL.

This sequence belongs to the TRAFAC class translation factor GTPase superfamily. Classic translation factor GTPase family. EF-Tu/EF-1A subfamily. In terms of assembly, monomer. Post-translationally, phosphorylated on serine and/or threonine residue(s). Dephosphorylated by stp.

The protein resides in the cytoplasm. It catalyses the reaction GTP + H2O = GDP + phosphate + H(+). In terms of biological role, GTP hydrolase that promotes the GTP-dependent binding of aminoacyl-tRNA to the A-site of ribosomes during protein biosynthesis. This is Elongation factor Tu from Listeria innocua serovar 6a (strain ATCC BAA-680 / CLIP 11262).